The chain runs to 445 residues: Rab GDP dissociation inhibitor beta (445 aa).

Methionine 1 carries the post-translational modification N-acetylmethionine. Lysine 57 carries the post-translational modification N6-succinyllysine. The residue at position 112 (lysine 112) is an N6-acetyllysine. Serine 130 carries the post-translational modification Phosphoserine. At lysine 269 the chain carries N6-acetyllysine. Serine 382 is subject to Phosphoserine.

The protein belongs to the Rab GDI family. In terms of assembly, interacts with RHOH. Interacts with the GDP-bound inactive forms of RAB3A, RAB3B, RAB3C, RAB5A, RAB5B, RAB5C, RAB8A, RAB8B, RAB10, RAB12, RAB35, and RAB43; binds RAB3D to a lesser extent. Interacts with DZIP1; this interaction negatively regulates the interaction of GDI2 with GDP-bound RAB8A. As to expression, ubiquitously expressed.

The protein resides in the cytoplasm. The protein localises to the membrane. Its subcellular location is the golgi apparatus. It is found in the trans-Golgi network. GDP-dissociation inhibitor preventing the GDP to GTP exchange of most Rab proteins. By keeping these small GTPases in their inactive GDP-bound form regulates intracellular membrane trafficking. Negatively regulates protein transport to the cilium and ciliogenesis through the inhibition of RAB8A. This is Rab GDP dissociation inhibitor beta (GDI2) from Bos taurus (Bovine).